The chain runs to 1849 residues: Mitogen-activated protein kinase kinase kinase mkh1 (1849 aa).

One can recognise a Protein kinase domain in the interval 1556-1825 (WFKGQLIGKG…TKLLAEHPFC (270 aa)). ATP is bound by residues 1562-1570 (IGKGTYGRV) and lysine 1585. The active-site Proton acceptor is the aspartate 1686.

Belongs to the protein kinase superfamily. STE Ser/Thr protein kinase family. MAP kinase kinase kinase subfamily.

It carries out the reaction L-seryl-[protein] + ATP = O-phospho-L-seryl-[protein] + ADP + H(+). The catalysed reaction is L-threonyl-[protein] + ATP = O-phospho-L-threonyl-[protein] + ADP + H(+). Mitogen-activated protein kinase kinase kinase, part of the mkh1-mkk1-spm1 MAPK cascade that regulates vegetative growth, conidial formation, colony surface hydrophobicity, osmotic stress, cell wall integrity maintenance, carbon and nitrogen source utilization, chitin distribution, septa formation, and pathogenicity. This Cytospora mali (Apple Valsa canker fungus) protein is Mitogen-activated protein kinase kinase kinase mkh1.